The primary structure comprises 1463 residues: Alpha-agarase (1463 aa).

The signal sequence occupies residues 1–27 (MITSSKKIVSAMLSTSLWIGVASAAYA). Positions 28-684 (ETTNVEAEGY…PSTLSESIFT (657 aa)) are excised as a propeptide. Disordered stretches follow at residues 166–191 (VTPE…PGTP) and 512–549 (TDDI…PQPG). Positions 518–536 (CANTPSGETANATGCSSSQ) are enriched in polar residues. Residues 534-677 (SSQEGGGTDP…GGTNFVHPST (144 aa)) form the PA14 domain. Positions 701–832 (IIVELESFVF…QWSGDRVRFT (132 aa)) constitute a CBM6 domain.

It belongs to the glycosyl hydrolase 96 family. Monomer. The cofactor is Ca(2+).

The catalysed reaction is Endohydrolysis of 1,3-alpha-L-galactosidic linkages in agarose, yielding agarotetraose as the major product.. Functionally, alpha-agarase. Hydrolyzes agarose, agarohexaose, neoagarohexaose and porphyran. Hydrolysis of porphyran by this enzyme improves its antioxidant activity. Does not hydrolyze kappa-carrageenan, iota-carrageenen or lambda-carrageenan. The polypeptide is Alpha-agarase (Thalassotalea agarivorans (Thalassomonas agarivorans)).